Here is a 287-residue protein sequence, read N- to C-terminus: Zinc finger protein SNAI3 (287 aa).

Positions 1–20 are SNAG domain; that stretch reads MPRSFLVKTHSSHRVPNYGK. C2H2-type zinc fingers lie at residues 147–169, 178–200, 204–226, and 232–254; these read FECIHCHRPYHTLAGLARHQQLH, FTCRYCDKEYASLGALKMHIRTH, CICKVCGKAFSRPWLLQGHIRTH, and YTCSHCSRAFADRSNLRAHLQTH. The C2H2-type 5; degenerate zinc-finger motif lies at 260–282; the sequence is YRCAVCPKAFSRMSLLARHEEAG.

It belongs to the snail C2H2-type zinc-finger protein family. As to expression, highly expressed in skeletal muscle and thymus. Lower expression in heart, lung and spleen.

The protein resides in the nucleus. Seems to inhibit myoblast differentiation. Transcriptional repressor of E-box-dependent transactivation of downstream myogenic bHLHs genes. Binds preferentially to the canonical E-box sequences 5'-CAGGTG-3' and 5'-CACCTG-3'. This chain is Zinc finger protein SNAI3 (Snai3), found in Mus musculus (Mouse).